A 250-amino-acid chain; its full sequence is 2,3-bisphosphoglycerate-dependent phosphoglycerate mutase (250 aa).

Substrate contacts are provided by residues 8–15, 21–22, Arg60, 87–90, Lys98, 114–115, and 183–184; these read RHGESQWN, TG, ERHY, RR, and GN. Residue His9 is the Tele-phosphohistidine intermediate of the active site. Residue Glu87 is the Proton donor/acceptor of the active site.

It belongs to the phosphoglycerate mutase family. BPG-dependent PGAM subfamily. In terms of assembly, homodimer.

The catalysed reaction is (2R)-2-phosphoglycerate = (2R)-3-phosphoglycerate. It participates in carbohydrate degradation; glycolysis; pyruvate from D-glyceraldehyde 3-phosphate: step 3/5. In terms of biological role, catalyzes the interconversion of 2-phosphoglycerate and 3-phosphoglycerate. The chain is 2,3-bisphosphoglycerate-dependent phosphoglycerate mutase from Bordetella avium (strain 197N).